We begin with the raw amino-acid sequence, 1187 residues long: Trafficking protein particle complex II-specific subunit 120 homolog (1187 aa).

The segment at 1037-1059 (GTTAKTDSSKEPGDGSSRSADES) is disordered.

The protein belongs to the TRS120 family. Part of the multisubunit TRAPP (transport protein particle) II complex composed of BET3, BET5, TRS20, TRS23, TRS31, TRS33, TRS65, TRS85, TRS120 and TRS130.

The protein resides in the golgi apparatus. Its subcellular location is the trans-Golgi network. The protein localises to the early endosome. Its function is as follows. Specific subunit of the TRAPP II complex, a highly conserved vesicle tethering complex that is required for the proper transport of proteins in post-Golgi trafficking pathways to the growing cell plate in mitotic active cells. The protein is Trafficking protein particle complex II-specific subunit 120 homolog of Oryza sativa subsp. japonica (Rice).